The sequence spans 300 residues: Nicotinate-nucleotide pyrophosphorylase [carboxylating] (300 aa).

Residues 5–9 (QLLPK) are important for hexamer formation. Residues arginine 107, 150-151 (RK), 172-173 (HR), lysine 183, glutamate 213, aspartate 234, 260-262 (SGG), and glycine 282 each bind quinolinate.

This sequence belongs to the NadC/ModD family. As to quaternary structure, hexamer formed by 3 homodimers.

It catalyses the reaction nicotinate beta-D-ribonucleotide + CO2 + diphosphate = quinolinate + 5-phospho-alpha-D-ribose 1-diphosphate + 2 H(+). The protein operates within cofactor biosynthesis; NAD(+) biosynthesis; nicotinate D-ribonucleotide from quinolinate: step 1/1. Its function is as follows. Involved in the catabolism of quinolinic acid (QA). In Dictyostelium discoideum (Social amoeba), this protein is Nicotinate-nucleotide pyrophosphorylase [carboxylating] (qprt).